The chain runs to 575 residues: Dihydroxy-acid dehydratase (575 aa).

Residues M1 to K27 are disordered. C61 serves as a coordination point for [2Fe-2S] cluster. Mg(2+) is bound at residue D93. C134 provides a ligand contact to [2Fe-2S] cluster. The Mg(2+) site is built by D135 and K136. K136 carries the N6-carboxylysine modification. [2Fe-2S] cluster is bound at residue C206. E460 contributes to the Mg(2+) binding site. S486 serves as the catalytic Proton acceptor.

The protein belongs to the IlvD/Edd family. As to quaternary structure, homodimer. [2Fe-2S] cluster is required as a cofactor. Mg(2+) serves as cofactor.

The catalysed reaction is (2R)-2,3-dihydroxy-3-methylbutanoate = 3-methyl-2-oxobutanoate + H2O. It catalyses the reaction (2R,3R)-2,3-dihydroxy-3-methylpentanoate = (S)-3-methyl-2-oxopentanoate + H2O. Its pathway is amino-acid biosynthesis; L-isoleucine biosynthesis; L-isoleucine from 2-oxobutanoate: step 3/4. It functions in the pathway amino-acid biosynthesis; L-valine biosynthesis; L-valine from pyruvate: step 3/4. Its function is as follows. Functions in the biosynthesis of branched-chain amino acids. Catalyzes the dehydration of (2R,3R)-2,3-dihydroxy-3-methylpentanoate (2,3-dihydroxy-3-methylvalerate) into 2-oxo-3-methylpentanoate (2-oxo-3-methylvalerate) and of (2R)-2,3-dihydroxy-3-methylbutanoate (2,3-dihydroxyisovalerate) into 2-oxo-3-methylbutanoate (2-oxoisovalerate), the penultimate precursor to L-isoleucine and L-valine, respectively. This Haloarcula marismortui (strain ATCC 43049 / DSM 3752 / JCM 8966 / VKM B-1809) (Halobacterium marismortui) protein is Dihydroxy-acid dehydratase.